Here is a 341-residue protein sequence, read N- to C-terminus: tRNA N6-adenosine threonylcarbamoyltransferase (341 aa).

The Fe cation site is built by His115 and His119. Residues 137 to 141 (IVSGG), Asp170, Gly183, Asp187, and Asn276 contribute to the substrate site. Asp304 is a binding site for Fe cation.

The protein belongs to the KAE1 / TsaD family. Fe(2+) is required as a cofactor.

The protein localises to the cytoplasm. The catalysed reaction is L-threonylcarbamoyladenylate + adenosine(37) in tRNA = N(6)-L-threonylcarbamoyladenosine(37) in tRNA + AMP + H(+). Its function is as follows. Required for the formation of a threonylcarbamoyl group on adenosine at position 37 (t(6)A37) in tRNAs that read codons beginning with adenine. Is involved in the transfer of the threonylcarbamoyl moiety of threonylcarbamoyl-AMP (TC-AMP) to the N6 group of A37, together with TsaE and TsaB. TsaD likely plays a direct catalytic role in this reaction. The chain is tRNA N6-adenosine threonylcarbamoyltransferase from Staphylococcus aureus (strain MRSA252).